Reading from the N-terminus, the 441-residue chain is Ribosomal protein uS12 methylthiotransferase RimO (441 aa).

In terms of domain architecture, MTTase N-terminal spans 8–118; the sequence is PKIGFVSLGC…VLEHVHHYVP (111 aa). [4Fe-4S] cluster is bound by residues C17, C53, C82, C150, C154, and C157. The region spanning 136 to 373 is the Radical SAM core domain; sequence LTPRHYAYLK…MQLQQQISAE (238 aa). The region spanning 376 to 441 is the TRAM domain; sequence QEKVGREILV…DEYDLWGSRV (66 aa).

The protein belongs to the methylthiotransferase family. RimO subfamily. [4Fe-4S] cluster serves as cofactor.

It localises to the cytoplasm. It catalyses the reaction L-aspartate(89)-[ribosomal protein uS12]-hydrogen + (sulfur carrier)-SH + AH2 + 2 S-adenosyl-L-methionine = 3-methylsulfanyl-L-aspartate(89)-[ribosomal protein uS12]-hydrogen + (sulfur carrier)-H + 5'-deoxyadenosine + L-methionine + A + S-adenosyl-L-homocysteine + 2 H(+). Catalyzes the methylthiolation of an aspartic acid residue of ribosomal protein uS12. This Escherichia coli (strain UTI89 / UPEC) protein is Ribosomal protein uS12 methylthiotransferase RimO.